Here is a 607-residue protein sequence, read N- to C-terminus: Matrix metalloproteinase-16 (607 aa).

The signal sequence occupies residues 1–31 (MILLAFSSGRRLDFVHRSGVFFLQTLLWILC). Positions 32–119 (ATVCGTEQYF…SSKFNIRRKR (88 aa)) are excised as a propeptide. An N-linked (GlcNAc...) asparagine glycan is attached at Asn83. The Cysteine switch motif lies at 99–106 (PRCGVPDQ). Cys101 is a binding site for Zn(2+). Residues 120-564 (YALTGQKWQH…LDNTASTVKA (445 aa)) are Extracellular-facing. A Ca(2+)-binding site is contributed by Asp183. Positions 193 and 195 each coordinate Zn(2+). Positions 200, 201, 203, and 205 each coordinate Ca(2+). Residue His208 coordinates Zn(2+). Residues Gly215, Gly217, and Asp219 each contribute to the Ca(2+) site. Residue His221 coordinates Zn(2+). Positions 223 and 226 each coordinate Ca(2+). Residue His246 coordinates Zn(2+). Glu247 is an active-site residue. Residues His250 and His256 each coordinate Zn(2+). Positions 281–340 (DDLQGIQKIYGPPDKIPPPTRPLPTVPPHRSVPPADPRRHDRPKPPRPPTGRPSYPGAKP) are disordered. The span at 294–315 (DKIPPPTRPLPTVPPHRSVPPA) shows a compositional bias: pro residues. Hemopexin repeat units follow at residues 340 to 388 (PNIC…WRGL), 389 to 434 (PPSI…GNGI), 436 to 484 (PHGI…KGIP), and 485 to 532 (ESPQ…FMGC). A disulfide bond links Cys343 and Cys532. The helical transmembrane segment at 565–585 (IAIVIPCILALCLLVLVYTVF) threads the bilayer. Topologically, residues 586-607 (QFKRKGTPRHILYCKRSMQEWV) are cytoplasmic.

The protein belongs to the peptidase M10A family. Interacts with CSPG4 through CSPG4 chondroitin sulfate glycosaminoglycan. Zn(2+) serves as cofactor. Ca(2+) is required as a cofactor. In terms of processing, the precursor is cleaved by a furin endopeptidase.

The protein localises to the cell membrane. Endopeptidase that degrades various components of the extracellular matrix, such as collagen type III and fibronectin. Activates progelatinase A. Involved in the matrix remodeling of blood vessels. It has no effect on type I, II, IV and V collagen. However, upon interaction with CSPG4, it may be involved in degradation and invasion of type I collagen by melanoma cells. The chain is Matrix metalloproteinase-16 (Mmp16) from Mus musculus (Mouse).